Consider the following 2269-residue polypeptide: Anaphase-promoting complex subunit 1 (2269 aa).

5 disordered regions span residues 305–334, 379–433, 609–644, 804–845, and 1136–1197; these read PSSNAENDNTNNNNNNNNTNTNISNNQTIN, SSPP…QENS, NNNNNNNNNNNNNNNNNNNNNNNNNNNNNNNKRKPL, KVYP…NNNN, and STAS…NSTS. 5 stretches are compositionally biased toward low complexity: residues 306-334, 379-430, 609-638, 809-845, and 1136-1159; these read SSNAENDNTNNNNNNNNTNTNISNNQTIN, SSPP…QQQQ, NNNNNNNNNNNNNNNNNNNNNNNNNNNNNN, NNNNNNNNNNNNNNNNNNNNNNNNNNNNNNNNNNNNN, and STASSSSNEMNSNSNITSINGQSN. Residues 1160 to 1177 are compositionally biased toward polar residues; sequence GLPMNSTTNQMNSHQINN. PC repeat units lie at residues 1440–1472 and 1483–1520; these read AALMGIGLLYCQTSNRRMTEVLLMEIGRKPIND and TAGMALGLVNLGKGANEGSLTDLHVEDRLRSFIGISKE. The tract at residues 1535–1586 is disordered; it reads STPSISSNRNNNDLFNNGSNNNSSSNGGGGGGGGNNNGNNSNNGNNGSSQFK. Residues 1540-1559 are compositionally biased toward low complexity; it reads SSNRNNNDLFNNGSNNNSSS. Residues 1560–1570 show a composition bias toward gly residues; it reads NGGGGGGGGNN. The span at 1571 to 1583 shows a compositional bias: low complexity; sequence NGNNSNNGNNGSS. PC repeat units follow at residues 1605–1637, 1722–1756, and 1792–1807; these read GAIIALSLIYLKTNNLKISNYLSIPDTTFGLNY, GAAFSIGLKYAGSLNENAFSLLMDLIQLFRKRQVY, and LVMAGSGNLETLKILR. Positions 1960 to 1993 are enriched in low complexity; that stretch reads NNNNNNNNNNNNNNNNNNNNNNNNNNNNNNNNNN. Residues 1960-1997 are disordered; the sequence is NNNNNNNNNNNNNNNNNNNNNNNNNNNNNNNNNNKNIL.

Belongs to the APC1 family. The APC/C is composed of at least 13 subunits that stay tightly associated throughout the cell cycle: anapc1, anapc2, anapc3, anapc4, anapc5, anapc6, anapc7, anapc8, anapc10, anapc11, cdc20, cdc26 and cdh1.

The protein localises to the nucleus. The protein operates within protein modification; protein ubiquitination. Component of the anaphase promoting complex/cyclosome (APC/C), a cell cycle-regulated E3 ubiquitin-protein ligase complex that controls progression through mitosis and the G1 phase of the cell cycle. This is Anaphase-promoting complex subunit 1 (anapc1) from Dictyostelium discoideum (Social amoeba).